A 563-amino-acid polypeptide reads, in one-letter code: Arginine--tRNA ligase (563 aa).

The 'HIGH' region signature appears at 121–131 (PNIAKPFSIGH).

It belongs to the class-I aminoacyl-tRNA synthetase family. In terms of assembly, monomer.

It localises to the cytoplasm. The enzyme catalyses tRNA(Arg) + L-arginine + ATP = L-arginyl-tRNA(Arg) + AMP + diphosphate. In Streptococcus pneumoniae (strain ATCC BAA-255 / R6), this protein is Arginine--tRNA ligase.